The following is a 139-amino-acid chain: Heat shock protein homolog C338.06c (139 aa).

The region spanning 27-139 (AWLSCWGPAL…EFTTRIVEIQ (113 aa)) is the sHSP domain.

The protein belongs to the small heat shock protein (HSP20) family.

Its subcellular location is the mitochondrion. This chain is Heat shock protein homolog C338.06c, found in Schizosaccharomyces pombe (strain 972 / ATCC 24843) (Fission yeast).